The sequence spans 257 residues: Tryptophan synthase alpha chain (257 aa).

Catalysis depends on proton acceptor residues E46 and D57.

It belongs to the TrpA family. In terms of assembly, tetramer of two alpha and two beta chains.

The enzyme catalyses (1S,2R)-1-C-(indol-3-yl)glycerol 3-phosphate + L-serine = D-glyceraldehyde 3-phosphate + L-tryptophan + H2O. Its pathway is amino-acid biosynthesis; L-tryptophan biosynthesis; L-tryptophan from chorismate: step 5/5. The alpha subunit is responsible for the aldol cleavage of indoleglycerol phosphate to indole and glyceraldehyde 3-phosphate. This Parabacteroides distasonis (strain ATCC 8503 / DSM 20701 / CIP 104284 / JCM 5825 / NCTC 11152) protein is Tryptophan synthase alpha chain.